The chain runs to 759 residues: Arylphorin subunit A4 (759 aa).

The first 16 residues, 1–16 (MKIAIVLLAIIALVAA), serve as a signal peptide directing secretion.

It belongs to the hemocyanin family. Heterohexamer. As to expression, fat body.

Its subcellular location is the secreted. The protein localises to the extracellular space. Its function is as follows. Arylphorin is a larval storage protein (LSP) which may serve as a storage protein used primarily as a source of aromatic amino acids for protein synthesis during metamorphosis. It is a constituent of the sclerotizing system of the cuticle, and serves as a carrier for ecdysteroid hormone. This is Arylphorin subunit A4 from Calliphora vicina (Blue blowfly).